A 292-amino-acid polypeptide reads, in one-letter code: Putative sugar lactone lactonase YvrE (292 aa).

Residues Glu-15, Asn-146, and Asp-196 each coordinate a divalent metal cation.

This sequence belongs to the SMP-30/CGR1 family. A divalent metal cation serves as cofactor.

It is found in the cytoplasm. This is Putative sugar lactone lactonase YvrE (yvrE) from Bacillus subtilis (strain 168).